The chain runs to 661 residues: Sperm transmembrane protein 9 (661 aa).

A signal peptide spans 1–16 (MNVILVLVVLFFAGDC). At 17 to 618 (AKIRKIIDFL…MTNRLMKNYE (602 aa)) the chain is on the extracellular side. The EGF-like 1 domain maps to 52 to 90 (NFNPCLENPKICSNRGKCLHENGNFYCICPVTHYGKTCE). Cystine bridges form between Cys-56–Cys-69, Cys-63–Cys-78, and Cys-80–Cys-89. Asn-105, Asn-106, Asn-134, and Asn-190 each carry an N-linked (GlcNAc...) asparagine glycan. Residues 210-259 (QISACFDTQCDNGGICEDVVDWKTKTVTATCKCPSAIELIGGTVTGENCE) form the EGF-like 2 domain. 3 disulfide bridges follow: Cys-214–Cys-225, Cys-219–Cys-240, and Cys-242–Cys-258. Residues Asn-279, Asn-290, Asn-316, and Asn-338 are each glycosylated (N-linked (GlcNAc...) asparagine). Residues 377–379 (RGD) carry the Cell attachment site motif. EGF-like domains follow at residues 377–414 (RGDRWDEKCTDSQHGACVDISGVAHCVCKPDYTGEKCE), 519–557 (HTNPCYQNLCQNSATCHIDPKQRSYDCQCVNGTRGSLCE), and 559–600 (VDDS…LDCN). Cystine bridges form between Cys-385–Cys-402, Cys-393–Cys-404, Cys-413–Cys-419, Cys-523–Cys-534, Cys-528–Cys-545, Cys-547–Cys-556, Cys-563–Cys-576, Cys-571–Cys-588, and Cys-590–Cys-599. A glycan (N-linked (GlcNAc...) asparagine) is linked at Asn-549. The chain crosses the membrane as a helical span at residues 619–639 (FSLPLVACFVSLAILLPVIVI). The Cytoplasmic segment spans residues 640-661 (SRRRQGRVEEAKKTSEVKTENP).

Expressed in spermatids, during spermogenesis expression is primarily localized to the pseudopod.

It localises to the cytoplasm. Its subcellular location is the membrane. Functionally, required for fertilization. May be required for cell adhesion and/or function as a signaling molecule. The chain is Sperm transmembrane protein 9 (spe-9) from Caenorhabditis elegans.